The sequence spans 4022 residues: Intermembrane lipid transfer protein VPS13B (4022 aa).

One can recognise a Chorein N-terminal domain in the interval 2–102 (LESYVTPILM…KDGIQDDHES (101 aa)). Residues 100-134 (HESCGSNSTNRSTAESTKSSIKPRRMQQAAPTDPD) form a disordered region. A compositionally biased stretch (polar residues) spans 103-119 (CGSNSTNRSTAESTKSS). Ser414, Ser999, Ser1002, and Ser1033 each carry phosphoserine. Residues 1247-1314 (NLSPTSPETM…SVTLEQTTSN (68 aa)) are disordered. Composition is skewed to polar residues over residues 1264-1292 (PVRSSIGTAPPDTSTCSPSADIGTTTEGD) and 1302-1314 (FSDSVTLEQTTSN). Ser1815 is subject to Phosphoserine. Positions 1860 to 1872 (KSQEQKNNEKTDK) are enriched in basic and acidic residues. The disordered stretch occupies residues 1860–1880 (KSQEQKNNEKTDKSSLNLPEV). Residues 2631–2716 (HFVICNDTQE…RTASLIIKVQ (86 aa)) form the SHR-BD domain. Residues 3908–4022 (AFPVTEIDCA…KNKALRKGFP (115 aa)) form a localizes the protein to the Golgi apparatus region.

This sequence belongs to the VPS13 family. As to quaternary structure, interacts with STX6. Interacts with STX12. Interacts with RAB6A isoform 1 (GTP-bound) and isoform 2 (GTP-bound). Interacts with RAB6B (GTP-bound). In terms of tissue distribution, widely expressed. There is apparent differential expression of different transcripts. In fetal brain, lung, liver, and kidney, two transcripts of 2 and 5 kb are identified. These transcripts are also seen in all adult tissues analyzed. A larger transcript (12-14 kb) is expressed in prostate, testis, ovary, and colon in the adult. Expression is very low in adult brain tissue. Expressed in peripheral blood lymphocytes. Isoform 1 and isoform 2 are expressed in brain and retina. Isoform 2 is expressed ubiquitously.

The protein localises to the recycling endosome membrane. The protein resides in the cytoplasmic vesicle. Its subcellular location is the secretory vesicle. It localises to the acrosome membrane. It is found in the golgi apparatus. The protein localises to the cis-Golgi network membrane. The protein resides in the endoplasmic reticulum-Golgi intermediate compartment membrane. Its subcellular location is the trans-Golgi network membrane. It localises to the early endosome membrane. It is found in the lysosome membrane. In terms of biological role, mediates the transfer of lipids between membranes at organelle contact sites. Binds phosphatidylinositol 3-phosphate. Functions as a tethering factor in the slow endocytic recycling pathway, to assist traffic between early and recycling endosomes. Involved in the transport of proacrosomal vesicles to the nuclear dense lamina (NDL) during spermatid development. Plays a role in the assembly of the Golgi apparatus, possibly by mediating trafficking to the Golgi membrane. Plays a role in the development of the nervous system, and may be required for neuron projection development. May also play a role during adipose tissue development. Required for maintenance of the ocular lens. The polypeptide is Intermembrane lipid transfer protein VPS13B (VPS13B) (Homo sapiens (Human)).